Consider the following 258-residue polypeptide: Imidazole glycerol phosphate synthase subunit HisF (258 aa).

Catalysis depends on residues aspartate 11 and aspartate 130.

This sequence belongs to the HisA/HisF family. Heterodimer of HisH and HisF.

It is found in the cytoplasm. The catalysed reaction is 5-[(5-phospho-1-deoxy-D-ribulos-1-ylimino)methylamino]-1-(5-phospho-beta-D-ribosyl)imidazole-4-carboxamide + L-glutamine = D-erythro-1-(imidazol-4-yl)glycerol 3-phosphate + 5-amino-1-(5-phospho-beta-D-ribosyl)imidazole-4-carboxamide + L-glutamate + H(+). It functions in the pathway amino-acid biosynthesis; L-histidine biosynthesis; L-histidine from 5-phospho-alpha-D-ribose 1-diphosphate: step 5/9. IGPS catalyzes the conversion of PRFAR and glutamine to IGP, AICAR and glutamate. The HisF subunit catalyzes the cyclization activity that produces IGP and AICAR from PRFAR using the ammonia provided by the HisH subunit. This Salmonella arizonae (strain ATCC BAA-731 / CDC346-86 / RSK2980) protein is Imidazole glycerol phosphate synthase subunit HisF.